The sequence spans 550 residues: Formate--tetrahydrofolate ligase (550 aa).

ATP is bound at residue 60 to 67 (TPFGEGKT).

This sequence belongs to the formate--tetrahydrofolate ligase family.

The catalysed reaction is (6S)-5,6,7,8-tetrahydrofolate + formate + ATP = (6R)-10-formyltetrahydrofolate + ADP + phosphate. The protein operates within one-carbon metabolism; tetrahydrofolate interconversion. The polypeptide is Formate--tetrahydrofolate ligase (Campylobacter curvus (strain 525.92)).